The primary structure comprises 228 residues: Histidine/lysine/arginine/ornithine transport system permease protein HisQ (228 aa).

Over 1-12 the chain is Periplasmic; that stretch reads MLYGFSGVILQG. The helical transmembrane segment at 13–33 threads the bilayer; it reads AIVTLELALSSVVLAVLIGLV. The region spanning 13–212 is the ABC transmembrane type-1 domain; the sequence is AIVTLELALS…VFTTVSNGVL (200 aa). Residues 34–58 lie on the Cytoplasmic side of the membrane; that stretch reads GAGAKLSQNRVTGLIFEGYTTLIRG. A helical transmembrane segment spans residues 59-79; the sequence is VPDLVLMLLIFYGLQIALNVV. The Periplasmic segment spans residues 80 to 87; that stretch reads TDSLGIDQ. The chain crosses the membrane as a helical span at residues 88 to 108; that stretch reads IDIDPMVAGIITLGFIYGAYF. Residues 109–152 are Cytoplasmic-facing; it reads TETFRGAFMAVPKGHIEAATAFGFTHGQTFRRIMFPAMMRYALP. The helical transmembrane segment at 153–173 threads the bilayer; that stretch reads GIGNNWQVILKATALVSLLGL. Residues 174–194 are Periplasmic-facing; sequence EDVVKATQLAGKSTWEPFYFA. Residues 195–215 form a helical membrane-spanning segment; sequence VVCGLIYLVFTTVSNGVLLLL. Over 216 to 228 the chain is Cytoplasmic; it reads ERRYSVGVKRADL.

This sequence belongs to the binding-protein-dependent transport system permease family. HisMQ subfamily. The HisPMQJ complex is composed of two ATP-binding proteins (HisP), two transmembrane proteins (HisM and HisQ) and a solute-binding protein (HisJ). The HisPMQ-ArgT complex is composed of two ATP-binding proteins (HisP), two transmembrane proteins (HisM and HisQ) and a solute-binding protein (ArgT).

It is found in the cell inner membrane. In terms of biological role, part of the ABC transporter complex HisPMQJ involved in histidine transport. Is also part of the ABC transporter complex HisPMQ-ArgT involved in lysine/arginine/ornithine transport. Probably responsible for the translocation of the substrate across the membrane. The protein is Histidine/lysine/arginine/ornithine transport system permease protein HisQ (hisQ) of Salmonella typhi.